The chain runs to 264 residues: Cell cycle regulator CcrZ (264 aa).

Positions 32, 70, and 73 each coordinate ATP. The Brenner's motif [HXDhX3N] signature appears at 157-164 (HGDVRHSN). The active-site Proton acceptor is D159. An APH motif is present at residues 173–196 (IYLVDWDSVRLTDRMFDVAHMLCH).

Belongs to the aminoglycoside phosphotransferase family. Monomer in solution. Interacts with DnaA (via domains I (1-82) and III (111-326)). Interacts with DnaB. Interacts with FtsZ; the interaction is direct and ensures correct localization during the cell cycle.

The protein resides in the cytoplasm. It carries out the reaction D-ribose + ATP = D-ribose 5-phosphate + ADP + H(+). The enzyme catalyses 2-deoxy-D-ribose + ATP = 2-deoxy-D-ribose 5-phosphate + ADP + H(+). In terms of biological role, plays a role in cell cycle regulation and chromosome integrity. Activates DnaA-dependent chromosomal DNA replication initiation ensuring that the chromosome is replicated at the right time during the cell cycle. May regulate replication initiation through phosphorylation of a possible second messenger or metabolite, and by interacting with replication initiation proteins. Has ATPase activity with D-ribose and 2-deoxy-D-ribose in vitro, but not with choline. Involved in DNA damage response. This chain is Cell cycle regulator CcrZ, found in Streptococcus pneumoniae serotype 2 (strain D39 / NCTC 7466).